Here is a 20-residue protein sequence, read N- to C-terminus: Large ribosomal subunit protein bL33 (20 aa).

This sequence belongs to the bacterial ribosomal protein bL33 family.

The protein is Large ribosomal subunit protein bL33 (rpmG) of Brevundimonas vesicularis (Pseudomonas vesicularis).